The primary structure comprises 664 residues: PAN2-PAN3 deadenylation complex subunit PAN3 (664 aa).

Disordered regions lie at residues 1-27 (MATTGKSATLEDARHGTGSPKMKGREN) and 54-134 (DPHK…PGTM). Residues 27 to 56 (NAKDTLCRNVTIYGRCRYEDKGCAFNHDPH) form a C3H1-type zinc finger. The segment covering 74 to 96 (DSPSFTPSILSSNGSSPTSQSAT) has biased composition (polar residues). Positions 115–131 (PRSISSRSNSSTPTTRP) are enriched in low complexity. Residues 265–525 (QTLPNTQLPA…NIDIFITGIS (261 aa)) form a pseudokinase domain region. ATP is bound by residues Arg317, 366–373 (DYHPLSKT), and 425–426 (SK). The stretch at 526 to 564 (STLMSTFDSALHLDDQLTSDLSRELENGRLVRLMTKLNF) forms a coiled coil. Residues 565 to 664 (VNERPEYEHD…LKPSASRRLH (100 aa)) are knob domain.

The protein belongs to the protein kinase superfamily. PAN3 family. In terms of assembly, homodimer. Forms a heterotrimer with a catalytic subunit pan2 to form the poly(A)-nuclease (PAN) deadenylation complex. Interacts (via PAM-2 motif) with poly(A)-binding protein pab1 (via PABC domain), conferring substrate specificity of the enzyme complex.

The protein localises to the cytoplasm. Functionally, regulatory subunit of the poly(A)-nuclease (PAN) deadenylation complex, one of two cytoplasmic mRNA deadenylases involved in mRNA turnover. PAN specifically shortens poly(A) tails of RNA and the activity is stimulated by poly(A)-binding protein pab1. PAN deadenylation is followed by rapid degradation of the shortened mRNA tails by the CCR4-NOT complex. Deadenylated mRNAs are then degraded by two alternative mechanisms, namely exosome-mediated 3'-5' exonucleolytic degradation, or deadenylation-dependent mRNA decaping and subsequent 5'-3' exonucleolytic degradation by xrn1. May also be involved in post-transcriptional maturation of mRNA poly(A) tails. pan3 acts as a positive regulator for PAN activity, recruiting the catalytic subunit pan2 to mRNA via its interaction with RNA and with pab1. The protein is PAN2-PAN3 deadenylation complex subunit PAN3 of Aspergillus niger (strain ATCC MYA-4892 / CBS 513.88 / FGSC A1513).